The chain runs to 361 residues: MKRAYNFNAGPSALPTEVLEKAQSELLDFENTGMSVMELSHRSKEYENVHHTAAQLLRDLLNIPEDYDVLFLQGGASLQFAMIPLNFLDEGKVANYILTGSWSEKALKEAKFIGKTAIAGSTKESNYTFIPDISSLQYNEHDSYVHLTSNNTIFGTQWHTYPSVSHAPLIVDMSSDILSRPLPVKNFDLIYAGAQKNLGPSGVTVVIIRKELLKRNVDHVPTMLRYQTHAEKQSLYNTPPTFGIYMLKEVLQWLKNIGGTEQIAERNQTKANLIYGAIDESEQFYKGHATKESRSLMNVTFTLPTEELTQQFLSEAKEKGFVGLNGHRSVGGCRASIYNGVPVEACEALADFMHSFYQTHR.

Arginine 42 provides a ligand contact to L-glutamate. Residues 76–77 (AS), tryptophan 102, threonine 152, aspartate 172, and glutamine 195 contribute to the pyridoxal 5'-phosphate site. At lysine 196 the chain carries N6-(pyridoxal phosphate)lysine. Residue 237–238 (NT) participates in pyridoxal 5'-phosphate binding.

It belongs to the class-V pyridoxal-phosphate-dependent aminotransferase family. SerC subfamily. Homodimer. It depends on pyridoxal 5'-phosphate as a cofactor.

The protein localises to the cytoplasm. The enzyme catalyses O-phospho-L-serine + 2-oxoglutarate = 3-phosphooxypyruvate + L-glutamate. It carries out the reaction 4-(phosphooxy)-L-threonine + 2-oxoglutarate = (R)-3-hydroxy-2-oxo-4-phosphooxybutanoate + L-glutamate. It functions in the pathway amino-acid biosynthesis; L-serine biosynthesis; L-serine from 3-phospho-D-glycerate: step 2/3. Catalyzes the reversible conversion of 3-phosphohydroxypyruvate to phosphoserine and of 3-hydroxy-2-oxo-4-phosphonooxybutanoate to phosphohydroxythreonine. This is Phosphoserine aminotransferase from Halalkalibacterium halodurans (strain ATCC BAA-125 / DSM 18197 / FERM 7344 / JCM 9153 / C-125) (Bacillus halodurans).